The primary structure comprises 86 residues: Triple QxxK/R motif-containing protein (86 aa).

The chain crosses the membrane as a helical span at residues 51–71 (VGLVLAAILALLLAFYAFFYL).

It belongs to the TRIQK family.

The protein resides in the endoplasmic reticulum membrane. Functionally, may play a role in cell growth and maintenance of cell morphology. The sequence is that of Triple QxxK/R motif-containing protein (TRIQK) from Pongo abelii (Sumatran orangutan).